Reading from the N-terminus, the 490-residue chain is MARFGTQKLYIDGGYVDAGSDATFEAINPATGEVLAHVQRATQADVEKAVESAERGQKIWAAMTAMQRSRILRRAVDILRERNDELAMLETLDTGKSYSETRYVDIVTGADVLEYYAGLVPAIEGEQIPLRESSFVYTRREPLGVTVGIGAWNYPIQIALWKSAPALAAGNAMIFKPSEVTSLTTLKLAEIYTEAGLPDGVFNVLTGSGREVGTWLTEHPRIEKVSFTGGTTTGKKVMASASSSSLKEVTMELGGKSPLIICADADLDKAADIAMMANFYSSGQVCTNGTRVFIPAQMKAAFEAKIAERVARIRAGNPEDENTNFGPLVSFQHMESVLGYIAKGKQEGARVLCGGERLTEGDFAKGAFVAPTVFTDCTDDMTIVKEEIFGPVMSILTYETEEEVIRRANDTEYGLAAGVCTNDITRAHRIIHKLEAGICWINAWGESPAEMPVGGYKQSGVGRENGISSLAQYTRIKSVQVELGGYSSVF.

K(+) is bound by residues Ile27 and Asp93. NAD(+) is bound at residue 150 to 152 (GAW). Lys162 (charge relay system) is an active-site residue. Residue 176 to 179 (KPSE) participates in NAD(+) binding. Val180 is a binding site for K(+). 230–233 (GTTT) contacts NAD(+). Leu246 serves as a coordination point for K(+). Glu252 (proton acceptor) is an active-site residue. The NAD(+) site is built by Gly254, Cys286, and Glu387. Residue Cys286 is the Nucleophile of the active site. Cys286 is subject to Cysteine sulfenic acid (-SOH). The K(+) site is built by Lys457 and Gly460. Glu464 functions as the Charge relay system in the catalytic mechanism.

It belongs to the aldehyde dehydrogenase family. As to quaternary structure, dimer of dimers. K(+) is required as a cofactor.

The enzyme catalyses betaine aldehyde + NAD(+) + H2O = glycine betaine + NADH + 2 H(+). It participates in amine and polyamine biosynthesis; betaine biosynthesis via choline pathway; betaine from betaine aldehyde: step 1/1. Its function is as follows. Involved in the biosynthesis of the osmoprotectant glycine betaine. Catalyzes the irreversible oxidation of betaine aldehyde to the corresponding acid. The chain is Betaine aldehyde dehydrogenase from Pseudomonas putida (strain W619).